The following is a 182-amino-acid chain: MKKKLLFLGPPGAGKGTQANLFCKKYGLIHLSTGDLLRDEVSSGSVLGIKAAEIMNKGELVSDELVLSIVEGRLANINEGWLLDGFPRNVNQANSLKNLLEKINQPLEGVILIKVADDYLIKRLVERGRQDDNEQVITNRLKIYREKTSPLIDLYKKQGILEEIEGNADIDVVFSCIEKSLG.

12-17 (GAGKGT) contributes to the ATP binding site. An NMP region spans residues 32–61 (STGDLLRDEVSSGSVLGIKAAEIMNKGELV). AMP is bound by residues T33, R38, 59–61 (ELV), 85–88 (GFPR), and Q92. The interval 126-132 (ERGRQDD) is LID. R127 contacts ATP. Residues R129 and R140 each contribute to the AMP site. A168 contacts ATP.

This sequence belongs to the adenylate kinase family. Monomer.

Its subcellular location is the cytoplasm. It carries out the reaction AMP + ATP = 2 ADP. It participates in purine metabolism; AMP biosynthesis via salvage pathway; AMP from ADP: step 1/1. Its function is as follows. Catalyzes the reversible transfer of the terminal phosphate group between ATP and AMP. Plays an important role in cellular energy homeostasis and in adenine nucleotide metabolism. This Prochlorococcus marinus (strain NATL2A) protein is Adenylate kinase.